Consider the following 73-residue polypeptide: Protein SlyX homolog (73 aa).

This sequence belongs to the SlyX family.

The chain is Protein SlyX homolog from Haemophilus ducreyi (strain 35000HP / ATCC 700724).